A 423-amino-acid polypeptide reads, in one-letter code: Lipoyl synthase 1, mitochondrial (423 aa).

Residues Cys-127, Cys-132, Cys-138, Cys-159, Cys-163, Cys-166, and Ser-375 each coordinate [4Fe-4S] cluster. Residues 142–364 (DEEEGTATAT…EEEAMAMGFL (223 aa)) enclose the Radical SAM core domain.

It belongs to the radical SAM superfamily. Lipoyl synthase family. The cofactor is [4Fe-4S] cluster.

It is found in the mitochondrion. The enzyme catalyses [[Fe-S] cluster scaffold protein carrying a second [4Fe-4S](2+) cluster] + N(6)-octanoyl-L-lysyl-[protein] + 2 oxidized [2Fe-2S]-[ferredoxin] + 2 S-adenosyl-L-methionine + 4 H(+) = [[Fe-S] cluster scaffold protein] + N(6)-[(R)-dihydrolipoyl]-L-lysyl-[protein] + 4 Fe(3+) + 2 hydrogen sulfide + 2 5'-deoxyadenosine + 2 L-methionine + 2 reduced [2Fe-2S]-[ferredoxin]. It functions in the pathway protein modification; protein lipoylation via endogenous pathway; protein N(6)-(lipoyl)lysine from octanoyl-[acyl-carrier-protein]: step 2/2. Its function is as follows. Catalyzes the radical-mediated insertion of two sulfur atoms into the C-6 and C-8 positions of the octanoyl moiety bound to the lipoyl domains of lipoate-dependent enzymes, thereby converting the octanoylated domains into lipoylated derivatives. The protein is Lipoyl synthase 1, mitochondrial of Trypanosoma cruzi (strain CL Brener).